Consider the following 85-residue polypeptide: Large ribosomal subunit protein bL27 (85 aa).

The interval Met1–Gly22 is disordered.

It belongs to the bacterial ribosomal protein bL27 family.

The sequence is that of Large ribosomal subunit protein bL27 from Escherichia coli O6:K15:H31 (strain 536 / UPEC).